A 461-amino-acid polypeptide reads, in one-letter code: Putative long chain fatty acid-CoA ligase VraA (461 aa).

The protein belongs to the ATP-dependent AMP-binding enzyme family.

This is Putative long chain fatty acid-CoA ligase VraA (vraA) from Staphylococcus haemolyticus (strain JCSC1435).